Reading from the N-terminus, the 334-residue chain is Beta-glucanase (334 aa).

The first 27 residues, 1–27 (MKNRVISLLMASLLLVLSVIVAPFYKA), serve as a signal peptide directing secretion. Positions 28–248 (EAATVVNTPF…YVKYYPNGVP (221 aa)) constitute a GH16 domain. Glu-136 (nucleophile) is an active-site residue. Catalysis depends on Glu-140, which acts as the Proton donor. In terms of domain architecture, Dockerin spans 267 to 334 (NLPLKGDVNG…RYLIRAIPSL (68 aa)).

This sequence belongs to the glycosyl hydrolase 16 family. In terms of assembly, may form part of a multienzyme complex (cellulosome).

The catalysed reaction is Hydrolysis of (1-&gt;4)-beta-D-glucosidic linkages in beta-D-glucans containing (1-&gt;3)- and (1-&gt;4)-bonds.. The chain is Beta-glucanase (licB) from Acetivibrio thermocellus (strain ATCC 27405 / DSM 1237 / JCM 9322 / NBRC 103400 / NCIMB 10682 / NRRL B-4536 / VPI 7372) (Clostridium thermocellum).